We begin with the raw amino-acid sequence, 257 residues long: Small ribosomal subunit protein uS15m (257 aa).

The N-terminal 57 residues, 1–57, are a transit peptide targeting the mitochondrion; it reads MLRVAWRTLSLIRTRAVTQVLVPGLPGGGSAKFPFNQWGLQPRSLLLQAARGYVVRK. A disordered region spans residues 225-257; the sequence is RALKAAAAAQKQAKRRNPDSPAKAIPKTLKDSQ.

Belongs to the universal ribosomal protein uS15 family. As to quaternary structure, component of the mitochondrial small ribosomal subunit (mt-SSU). Mature mammalian 55S mitochondrial ribosomes consist of a small (28S) and a large (39S) subunit. The 28S small subunit contains a 12S ribosomal RNA (12S mt-rRNA) and 30 different proteins. The 39S large subunit contains a 16S rRNA (16S mt-rRNA), a copy of mitochondrial valine transfer RNA (mt-tRNA(Val)), which plays an integral structural role, and 52 different proteins. Interacts with METTL17.

Its subcellular location is the mitochondrion matrix. This is Small ribosomal subunit protein uS15m (MRPS15) from Homo sapiens (Human).